Reading from the N-terminus, the 493-residue chain is Maintenance of mitochondrial morphology protein 1 (493 aa).

At 1 to 23 the chain is on the lumenal side; sequence MSQHSQYGVPGVPAQSSLSFTQG. The chain crosses the membrane as a helical span at residues 24-44; it reads FLLGQLSVVLLIGAFIKFFIF. Over 45 to 493 the chain is Cytoplasmic; the sequence is GEAPAPPSRG…GSMPRVVRTP (449 aa). The segment at 52 to 104 is disordered; the sequence is SRGLASRTASHHRSYSINQGDNNANNNTNNGSSPRTLREKPSTSNVLRPVPSS. The span at 69 to 81 shows a compositional bias: low complexity; it reads NQGDNNANNNTNN. A compositionally biased stretch (polar residues) spans 93–104; the sequence is STSNVLRPVPSS. Residues 140 to 391 form the SMP-LTD domain; the sequence is QPESLDWFNV…EPRVQVVGLP (252 aa). A disordered region spans residues 420-493; it reads SSRSGGGPVE…GSMPRVVRTP (74 aa).

It belongs to the MMM1 family. As to quaternary structure, homodimer. Component of the ER-mitochondria encounter structure (ERMES) or MDM complex, composed of mmm1, mdm10, mdm12 and mdm34. A mmm1 homodimer associates with one molecule of mdm12 on each side in a pairwise head-to-tail manner, and the SMP-LTD domains of mmm1 and mdm12 generate a continuous hydrophobic tunnel for phospholipid trafficking.

Its subcellular location is the endoplasmic reticulum membrane. In terms of biological role, component of the ERMES/MDM complex, which serves as a molecular tether to connect the endoplasmic reticulum (ER) and mitochondria. Components of this complex are involved in the control of mitochondrial shape and protein biogenesis, and function in nonvesicular lipid trafficking between the ER and mitochondria. The mdm12-mmm1 subcomplex functions in the major beta-barrel assembly pathway that is responsible for biogenesis of all outer membrane beta-barrel proteins, and acts in a late step after the SAM complex. The mdm10-mdm12-mmm1 subcomplex further acts in the TOM40-specific pathway after the action of the mdm12-mmm1 complex. Essential for establishing and maintaining the structure of mitochondria and maintenance of mtDNA nucleoids. The chain is Maintenance of mitochondrial morphology protein 1 from Talaromyces stipitatus (strain ATCC 10500 / CBS 375.48 / QM 6759 / NRRL 1006) (Penicillium stipitatum).